Reading from the N-terminus, the 87-residue chain is DNA-directed RNA polymerase subunit omega (87 aa).

The protein belongs to the RNA polymerase subunit omega family. The RNAP catalytic core consists of 2 alpha, 1 beta, 1 beta' and 1 omega subunit. When a sigma factor is associated with the core the holoenzyme is formed, which can initiate transcription.

It carries out the reaction RNA(n) + a ribonucleoside 5'-triphosphate = RNA(n+1) + diphosphate. In terms of biological role, promotes RNA polymerase assembly. Latches the N- and C-terminal regions of the beta' subunit thereby facilitating its interaction with the beta and alpha subunits. The chain is DNA-directed RNA polymerase subunit omega from Pseudomonas putida (strain ATCC 700007 / DSM 6899 / JCM 31910 / BCRC 17059 / LMG 24140 / F1).